The chain runs to 195 residues: TM2 domain-containing protein C41D11.9 (195 aa).

A signal peptide spans 1–20 (MLHKILFLICLASFIPTIGS). The Extracellular segment spans residues 21 to 136 (ISGTKDVKSK…NWSSGYSWTK (116 aa)). Asn-55, Asn-93, and Asn-127 each carry an N-linked (GlcNAc...) asparagine glycan. A TM2 domain is found at 131–179 (GYSWTKTMILSVVLGGFGADRFYLGLWKSAIGKLFSFGGLGVWTLVDVV). The chain crosses the membrane as a helical span at residues 137–157 (TMILSVVLGGFGADRFYLGLW). Residues 158–163 (KSAIGK) are Cytoplasmic-facing. A helical membrane pass occupies residues 164–184 (LFSFGGLGVWTLVDVVLIAVG). At 185–195 (YIKPYDGSMYI) the chain is on the extracellular side.

Belongs to the TM2 family.

The protein resides in the membrane. The protein is TM2 domain-containing protein C41D11.9 of Caenorhabditis elegans.